Consider the following 132-residue polypeptide: D-beta-hydroxybutyrate dehydrogenase, mitochondrial (132 aa).

3-27 (LVTGCDSGFGFSLAKHLHSKGFLVF) is a binding site for NAD(+). K17 is modified (N6-acetyllysine). Residue S59 coordinates substrate. The active-site Proton acceptor is Y66. At K70 the chain carries N6-acetyllysine. An O-linked (GlcNAc) serine glycan is attached at S77. Residue S104 is modified to Phosphoserine.

Belongs to the short-chain dehydrogenases/reductases (SDR) family. As to quaternary structure, homotetramer.

It localises to the mitochondrion inner membrane. The protein resides in the mitochondrion matrix. The catalysed reaction is (R)-3-hydroxybutanoate + NAD(+) = acetoacetate + NADH + H(+). With respect to regulation, requires phosphatidylcholine as an allosteric activator for enzymatic activity. In Mesocricetus auratus (Golden hamster), this protein is D-beta-hydroxybutyrate dehydrogenase, mitochondrial.